Here is a 366-residue protein sequence, read N- to C-terminus: tRNA(Met) cytidine acetate ligase (366 aa).

Residues 7-20 (VAEFNPFHYGHKYL), Gly-96, Asn-152, and Arg-175 each bind ATP.

The protein belongs to the TmcAL family.

It is found in the cytoplasm. The catalysed reaction is cytidine(34) in elongator tRNA(Met) + acetate + ATP = N(4)-acetylcytidine(34) in elongator tRNA(Met) + AMP + diphosphate. In terms of biological role, catalyzes the formation of N(4)-acetylcytidine (ac(4)C) at the wobble position of elongator tRNA(Met), using acetate and ATP as substrates. First activates an acetate ion to form acetyladenylate (Ac-AMP) and then transfers the acetyl group to tRNA to form ac(4)C34. In Streptococcus uberis (strain ATCC BAA-854 / 0140J), this protein is tRNA(Met) cytidine acetate ligase.